A 757-amino-acid polypeptide reads, in one-letter code: Receptor protein kinase-like protein At4g34220 (757 aa).

Residues Met-1 to Ala-26 form the signal peptide. LRR repeat units follow at residues Tyr-104–Ala-126, Glu-128–Val-150, Asn-152–Leu-174, Asn-176–Ala-198, Gln-199–Lys-219, Ser-220–Lys-242, and Ala-245–Leu-267. A helical transmembrane segment spans residues Ile-339–Tyr-359. Residues Lys-471–Ile-753 enclose the Protein kinase domain. Position 473 is a phosphoserine (Ser-473). At Thr-494 the chain carries Phosphothreonine. Ser-553 carries the phosphoserine modification. The tract at residues Ala-633–Thr-654 is disordered. Residues Thr-638 and Thr-639 each carry the phosphothreonine modification. The segment covering Thr-638–Thr-654 has biased composition (polar residues).

This sequence belongs to the protein kinase superfamily.

It is found in the membrane. The polypeptide is Receptor protein kinase-like protein At4g34220 (Arabidopsis thaliana (Mouse-ear cress)).